The following is a 586-amino-acid chain: Alpha-1,2-mannosyltransferase MNN5 (586 aa).

An N-terminal signal peptide occupies residues 1–29; sequence MLIRLKKRKILQVIVSAVVLILFFCSVHN. N-linked (GlcNAc...) asparagine glycosylation is found at Asn113, Asn136, Asn259, and Asn264.

The protein belongs to the MNN1/MNT family. Post-translationally, glycosylated.

The protein localises to the golgi apparatus. It localises to the cis-Golgi network. It participates in protein modification; protein glycosylation. In terms of biological role, responsible for addition of first and second mannose residues to the outer chain of core N-linked polysaccharides and to O-linked mannotriose. Implicated in late Golgi modifications. In Saccharomyces cerevisiae (strain YJM789) (Baker's yeast), this protein is Alpha-1,2-mannosyltransferase MNN5 (MNN5).